The chain runs to 376 residues: UPF0754 membrane protein SERP1382 (376 aa).

The next 2 helical transmembrane spans lie at 4–24 and 356–376; these read ILLV…TNMI and TLGF…AIFV.

It belongs to the UPF0754 family.

The protein localises to the cell membrane. In Staphylococcus epidermidis (strain ATCC 35984 / DSM 28319 / BCRC 17069 / CCUG 31568 / BM 3577 / RP62A), this protein is UPF0754 membrane protein SERP1382.